A 505-amino-acid chain; its full sequence is Deoxyguanosinetriphosphate triphosphohydrolase (505 aa).

One can recognise an HD domain in the interval 66–273 (RLTHSMEVQQ…MEAADDISYC (208 aa)).

The protein belongs to the dGTPase family. Type 1 subfamily. In terms of assembly, homotetramer. Mg(2+) serves as cofactor.

It carries out the reaction dGTP + H2O = 2'-deoxyguanosine + triphosphate + H(+). Its function is as follows. dGTPase preferentially hydrolyzes dGTP over the other canonical NTPs. The polypeptide is Deoxyguanosinetriphosphate triphosphohydrolase (Escherichia fergusonii (strain ATCC 35469 / DSM 13698 / CCUG 18766 / IAM 14443 / JCM 21226 / LMG 7866 / NBRC 102419 / NCTC 12128 / CDC 0568-73)).